A 226-amino-acid chain; its full sequence is Ribonuclease 3 (226 aa).

In terms of domain architecture, RNase III spans 5–127 (IFQRGDPIGH…IVAAIYLDCG (123 aa)). Glutamate 40 is a binding site for Mg(2+). The active site involves aspartate 44. Mg(2+)-binding residues include aspartate 113 and glutamate 116. Residue glutamate 116 is part of the active site. Positions 154 to 224 (DPKTRLQEWL…ATLVIAQLDS (71 aa)) constitute a DRBM domain.

Belongs to the ribonuclease III family. As to quaternary structure, homodimer. The cofactor is Mg(2+).

The protein resides in the cytoplasm. The catalysed reaction is Endonucleolytic cleavage to 5'-phosphomonoester.. Functionally, digests double-stranded RNA. Involved in the processing of primary rRNA transcript to yield the immediate precursors to the large and small rRNAs (23S and 16S). Processes some mRNAs, and tRNAs when they are encoded in the rRNA operon. Processes pre-crRNA and tracrRNA of type II CRISPR loci if present in the organism. The chain is Ribonuclease 3 from Xanthomonas oryzae pv. oryzae (strain KACC10331 / KXO85).